Consider the following 1124-residue polypeptide: Phytochrome A (1124 aa).

Residues 1 to 19 are compositionally biased toward low complexity; that stretch reads MSTTRPSQSSNNSGRSRNS. Positions 1 to 21 are disordered; the sequence is MSTTRPSQSSNNSGRSRNSAR. One can recognise a GAF domain in the interval 218–401; the sequence is SMERLCDTMV…VFAIHVNKEI (184 aa). Cys-323 contacts phytochromobilin. 2 PAS domains span residues 617 to 687 and 750 to 821; these read VTSE…LQGE and DYKA…VNFG. The region spanning 901–1120 is the Histidine kinase domain; sequence YMKRQIRNPL…ILSVELAAAH (220 aa).

The protein belongs to the phytochrome family. In terms of assembly, homodimer. In terms of processing, contains one covalently linked phytochromobilin chromophore.

In terms of biological role, regulatory photoreceptor which exists in two forms that are reversibly interconvertible by light: the Pr form that absorbs maximally in the red region of the spectrum and the Pfr form that absorbs maximally in the far-red region. Photoconversion of Pr to Pfr induces an array of morphogenic responses, whereas reconversion of Pfr to Pr cancels the induction of those responses. Pfr controls the expression of a number of nuclear genes including those encoding the small subunit of ribulose-bisphosphate carboxylase, chlorophyll A/B binding protein, protochlorophyllide reductase, rRNA, etc. It also controls the expression of its own gene(s) in a negative feedback fashion. This chain is Phytochrome A (PHYA), found in Pisum sativum (Garden pea).